Reading from the N-terminus, the 261-residue chain is Hydroxyethylthiazole kinase (261 aa).

Methionine 38 lines the substrate pocket. The ATP site is built by arginine 114 and threonine 159. A substrate-binding site is contributed by glycine 186.

The protein belongs to the Thz kinase family. The cofactor is Mg(2+).

The catalysed reaction is 5-(2-hydroxyethyl)-4-methylthiazole + ATP = 4-methyl-5-(2-phosphooxyethyl)-thiazole + ADP + H(+). Its pathway is cofactor biosynthesis; thiamine diphosphate biosynthesis; 4-methyl-5-(2-phosphoethyl)-thiazole from 5-(2-hydroxyethyl)-4-methylthiazole: step 1/1. Its function is as follows. Catalyzes the phosphorylation of the hydroxyl group of 4-methyl-5-beta-hydroxyethylthiazole (THZ). This Streptococcus suis (strain 05ZYH33) protein is Hydroxyethylthiazole kinase.